The chain runs to 396 residues: Elongation factor Tu (396 aa).

The tr-type G domain occupies Lys10 to Glu205. The interval Gly19 to Thr26 is G1. Residue Gly19 to Thr26 coordinates GTP. A Mg(2+)-binding site is contributed by Thr26. The segment at Gly60–Asn64 is G2. Positions Asp81 to Gly84 are G3. GTP-binding positions include Asp81 to His85 and Asn136 to Asp139. The segment at Asn136 to Asp139 is G4. The interval Ser174–Lys176 is G5.

The protein belongs to the TRAFAC class translation factor GTPase superfamily. Classic translation factor GTPase family. EF-Tu/EF-1A subfamily. As to quaternary structure, monomer.

The protein resides in the cytoplasm. It catalyses the reaction GTP + H2O = GDP + phosphate + H(+). GTP hydrolase that promotes the GTP-dependent binding of aminoacyl-tRNA to the A-site of ribosomes during protein biosynthesis. This is Elongation factor Tu from Brevibacillus brevis (strain 47 / JCM 6285 / NBRC 100599).